The following is a 156-amino-acid chain: ATP synthase subunit b (156 aa).

A helical transmembrane segment spans residues 12-32 (VAFFIFVIFCMKFVWPPVIAA).

This sequence belongs to the ATPase B chain family. In terms of assembly, F-type ATPases have 2 components, F(1) - the catalytic core - and F(0) - the membrane proton channel. F(1) has five subunits: alpha(3), beta(3), gamma(1), delta(1), epsilon(1). F(0) has three main subunits: a(1), b(2) and c(10-14). The alpha and beta chains form an alternating ring which encloses part of the gamma chain. F(1) is attached to F(0) by a central stalk formed by the gamma and epsilon chains, while a peripheral stalk is formed by the delta and b chains.

The protein localises to the cell inner membrane. Its function is as follows. F(1)F(0) ATP synthase produces ATP from ADP in the presence of a proton or sodium gradient. F-type ATPases consist of two structural domains, F(1) containing the extramembraneous catalytic core and F(0) containing the membrane proton channel, linked together by a central stalk and a peripheral stalk. During catalysis, ATP synthesis in the catalytic domain of F(1) is coupled via a rotary mechanism of the central stalk subunits to proton translocation. Component of the F(0) channel, it forms part of the peripheral stalk, linking F(1) to F(0). In Pseudomonas savastanoi pv. phaseolicola (strain 1448A / Race 6) (Pseudomonas syringae pv. phaseolicola (strain 1448A / Race 6)), this protein is ATP synthase subunit b.